Reading from the N-terminus, the 103-residue chain is Large ribosomal subunit protein uL24 (103 aa).

The protein belongs to the universal ribosomal protein uL24 family. As to quaternary structure, part of the 50S ribosomal subunit.

Its function is as follows. One of two assembly initiator proteins, it binds directly to the 5'-end of the 23S rRNA, where it nucleates assembly of the 50S subunit. One of the proteins that surrounds the polypeptide exit tunnel on the outside of the subunit. The chain is Large ribosomal subunit protein uL24 from Ruegeria pomeroyi (strain ATCC 700808 / DSM 15171 / DSS-3) (Silicibacter pomeroyi).